The following is a 331-amino-acid chain: DNA-directed RNA polymerase subunit alpha (331 aa).

The tract at residues 1-235 is alpha N-terminal domain (alpha-NTD); sequence MTMHIRWRGM…KHLNPFVQYR (235 aa). The segment at 255–331 is alpha C-terminal domain (alpha-CTD); the sequence is QLEAKLNMTL…GMRVPNQPLF (77 aa).

Belongs to the RNA polymerase alpha chain family. Homodimer. The RNAP catalytic core consists of 2 alpha, 1 beta, 1 beta' and 1 omega subunit. When a sigma factor is associated with the core the holoenzyme is formed, which can initiate transcription.

It carries out the reaction RNA(n) + a ribonucleoside 5'-triphosphate = RNA(n+1) + diphosphate. In terms of biological role, DNA-dependent RNA polymerase catalyzes the transcription of DNA into RNA using the four ribonucleoside triphosphates as substrates. In Rhodopirellula baltica (strain DSM 10527 / NCIMB 13988 / SH1), this protein is DNA-directed RNA polymerase subunit alpha.